We begin with the raw amino-acid sequence, 664 residues long: DNA ligase (664 aa).

Residues 32 to 36 (DKEYD) and 80 to 81 (SL) contribute to the NAD(+) site. Residue K122 is the N6-AMP-lysine intermediate of the active site. Positions 144, 178, and 314 each coordinate NAD(+). Zn(2+)-binding residues include C407, C410, C423, and C429. Positions 587 to 664 (IDENPFMDKT…NEEEFSNKIK (78 aa)) constitute a BRCT domain.

The protein belongs to the NAD-dependent DNA ligase family. LigA subfamily. Mg(2+) is required as a cofactor. Requires Mn(2+) as cofactor.

The enzyme catalyses NAD(+) + (deoxyribonucleotide)n-3'-hydroxyl + 5'-phospho-(deoxyribonucleotide)m = (deoxyribonucleotide)n+m + AMP + beta-nicotinamide D-nucleotide.. DNA ligase that catalyzes the formation of phosphodiester linkages between 5'-phosphoryl and 3'-hydroxyl groups in double-stranded DNA using NAD as a coenzyme and as the energy source for the reaction. It is essential for DNA replication and repair of damaged DNA. This is DNA ligase from Clostridium botulinum (strain Loch Maree / Type A3).